Here is a 275-residue protein sequence, read N- to C-terminus: 4-hydroxy-tetrahydrodipicolinate reductase (275 aa).

NAD(+)-binding positions include 13–18, 108–110, and 134–137; these read GAAGKM, GTT, and VPNF. The active-site Proton donor/acceptor is the histidine 164. Histidine 165 serves as a coordination point for (S)-2,3,4,5-tetrahydrodipicolinate. The active-site Proton donor is lysine 168. 174 to 175 is a binding site for (S)-2,3,4,5-tetrahydrodipicolinate; that stretch reads GT.

This sequence belongs to the DapB family.

The protein resides in the cytoplasm. The enzyme catalyses (S)-2,3,4,5-tetrahydrodipicolinate + NAD(+) + H2O = (2S,4S)-4-hydroxy-2,3,4,5-tetrahydrodipicolinate + NADH + H(+). It carries out the reaction (S)-2,3,4,5-tetrahydrodipicolinate + NADP(+) + H2O = (2S,4S)-4-hydroxy-2,3,4,5-tetrahydrodipicolinate + NADPH + H(+). The protein operates within amino-acid biosynthesis; L-lysine biosynthesis via DAP pathway; (S)-tetrahydrodipicolinate from L-aspartate: step 4/4. Its function is as follows. Catalyzes the conversion of 4-hydroxy-tetrahydrodipicolinate (HTPA) to tetrahydrodipicolinate. The sequence is that of 4-hydroxy-tetrahydrodipicolinate reductase from Gloeothece citriformis (strain PCC 7424) (Cyanothece sp. (strain PCC 7424)).